Reading from the N-terminus, the 401-residue chain is Adenosine 3'-phospho 5'-phosphosulfate transporter 2 (401 aa).

N-linked (GlcNAc...) asparagine glycans are attached at residues asparagine 12 and asparagine 71. 6 helical membrane passes run leucine 78–leucine 98, tyrosine 114–isoleucine 134, methionine 147–leucine 167, proline 170–isoleucine 190, asparagine 196–alanine 216, and asparagine 223–glycine 243. N-linked (GlcNAc...) asparagine glycosylation is present at asparagine 254. Transmembrane regions (helical) follow at residues isoleucine 267–threonine 287, glycine 298–leucine 317, leucine 324–alanine 346, and phenylalanine 349–tyrosine 369.

The protein belongs to the nucleotide-sugar transporter family. SLC35B subfamily. In terms of tissue distribution, preferentially and highly expressed in colon.

The protein localises to the golgi apparatus membrane. It carries out the reaction 3'-phosphoadenylyl sulfate(in) + adenosine 3',5'-bisphosphate(out) = 3'-phosphoadenylyl sulfate(out) + adenosine 3',5'-bisphosphate(in). Probably functions as a 3'-phosphoadenylyl sulfate:adenosine 3',5'-bisphosphate antiporter at the Golgi membranes. Mediates the transport from the cytosol into the lumen of the Golgi of 3'-phosphoadenylyl sulfate/adenosine 3'-phospho 5'-phosphosulfate (PAPS), a universal sulfuryl donor for sulfation events that take place in that compartment. This is Adenosine 3'-phospho 5'-phosphosulfate transporter 2 from Homo sapiens (Human).